We begin with the raw amino-acid sequence, 128 residues long: uncharacterized protein (128 aa).

2 helical membrane passes run 33-53 and 61-81; these read LLYI…VCYV and FFCW…VIIY. Residues 99 to 120 show a composition bias toward polar residues; it reads DSLNQNVGESQSNEPPKYTSTF. Residues 99–128 are disordered; sequence DSLNQNVGESQSNEPPKYTSTFMDELDKQD.

The protein localises to the membrane. This is an uncharacterized protein from Schizosaccharomyces pombe (strain 972 / ATCC 24843) (Fission yeast).